Reading from the N-terminus, the 397-residue chain is Tryptophan synthase beta chain (397 aa).

N6-(pyridoxal phosphate)lysine is present on K87.

Belongs to the TrpB family. Tetramer of two alpha and two beta chains. It depends on pyridoxal 5'-phosphate as a cofactor.

It catalyses the reaction (1S,2R)-1-C-(indol-3-yl)glycerol 3-phosphate + L-serine = D-glyceraldehyde 3-phosphate + L-tryptophan + H2O. It functions in the pathway amino-acid biosynthesis; L-tryptophan biosynthesis; L-tryptophan from chorismate: step 5/5. In terms of biological role, the beta subunit is responsible for the synthesis of L-tryptophan from indole and L-serine. The chain is Tryptophan synthase beta chain from Enterobacter sp. (strain 638).